A 65-amino-acid chain; its full sequence is Keratin-associated protein 20-2 (65 aa).

The protein belongs to the KRTAP type 20 family. As to quaternary structure, interacts with hair keratins.

In the hair cortex, hair keratin intermediate filaments are embedded in an interfilamentous matrix, consisting of hair keratin-associated proteins (KRTAP), which are essential for the formation of a rigid and resistant hair shaft through their extensive disulfide bond cross-linking with abundant cysteine residues of hair keratins. The matrix proteins include the high-sulfur and high-glycine-tyrosine keratins. The chain is Keratin-associated protein 20-2 (KRTAP20-2) from Homo sapiens (Human).